Consider the following 238-residue polypeptide: MSDVSYREITAKGLWSNNPALVQLLGLCPLLAVSSSVVNALGLGIATLLVLVISNSFVSLIRRQVSDAVRLPAFVMIIASAVTCTELLMKAFTYELYQILGLFIPLIVTNCAVLGRADAFASKNKLIPSAVDGFMMGLGFMLVLVAVGAVRELLGTGHLFGDMHLIFGEGARSWQLNIFGADYPNVIFALLPPGAFIVVGMLIAAKNSIDAHLKKRADARKTAVSTGSKRVRTTGAVS.

6 helical membrane-spanning segments follow: residues A20–A40, L41–I61, P72–F92, E95–G115, A130–V150, and N185–A205.

This sequence belongs to the NqrDE/RnfAE family. The complex is composed of six subunits: RnfA, RnfB, RnfC, RnfD, RnfE and RnfG.

The protein resides in the cell inner membrane. In terms of biological role, part of a membrane-bound complex that couples electron transfer with translocation of ions across the membrane. This is Ion-translocating oxidoreductase complex subunit E from Cellvibrio japonicus (strain Ueda107) (Pseudomonas fluorescens subsp. cellulosa).